The primary structure comprises 223 residues: Small ribosomal subunit protein uS3 (223 aa).

One can recognise a KH type-2 domain in the interval 39-117 (IREHLRKKPS…RPELNAKLVA (79 aa)).

Belongs to the universal ribosomal protein uS3 family. Part of the 30S ribosomal subunit. Forms a tight complex with proteins S10 and S14.

Its function is as follows. Binds the lower part of the 30S subunit head. Binds mRNA in the 70S ribosome, positioning it for translation. This is Small ribosomal subunit protein uS3 from Chlamydia caviae (strain ATCC VR-813 / DSM 19441 / 03DC25 / GPIC) (Chlamydophila caviae).